Here is a 378-residue protein sequence, read N- to C-terminus: Wnt inhibitory factor 1 (378 aa).

An N-terminal signal peptide occupies residues 1–28; the sequence is MAFRTPAVQLHLKACVLLLLGGLLEAAY. A WIF domain is found at 36–175; the sequence is MWIDANQARI…PHNAIFFKTC (140 aa). An N-linked (GlcNAc...) asparagine glycan is attached at Asn-86. Cystine bridges form between Cys-138–Cys-175, Cys-180–Cys-190, Cys-184–Cys-196, Cys-212–Cys-222, Cys-216–Cys-228, and Cys-230–Cys-239. EGF-like domains follow at residues 176–205, 208–240, 243–272, 272–304, and 305–336; these read QRAK…FYGV, EKAL…SSCE, NCST…VRCE, ELSK…DLCS, and KAVC…RHCN. An N-linked (GlcNAc...) asparagine glycan is attached at Asn-243. Cystine bridges form between Cys-244–Cys-254, Cys-248–Cys-260, Cys-262–Cys-271, Cys-276–Cys-286, Cys-280–Cys-292, Cys-294–Cys-303, Cys-308–Cys-318, Cys-312–Cys-324, and Cys-326–Cys-335. Residues 343-378 form a disordered region; sequence VSNSQRVSPSKHKSPSVAAAKEAPETSQPSETNYVV. The span at 367 to 378 shows a compositional bias: polar residues; it reads ETSQPSETNYVV.

Highly expressed in unsegmented paraxial mesoderm.

The protein resides in the secreted. Functionally, binds to WNT proteins and inhibits their activities. May be involved in mesoderm segmentation. The chain is Wnt inhibitory factor 1 (wif1) from Danio rerio (Zebrafish).